A 158-amino-acid chain; its full sequence is 2-C-methyl-D-erythritol 2,4-cyclodiphosphate synthase (158 aa).

A divalent metal cation is bound by residues Asp9 and His11. 4-CDP-2-C-methyl-D-erythritol 2-phosphate contacts are provided by residues 9–11 and 35–36; these read DVH and HS. Position 43 (His43) interacts with a divalent metal cation. 4-CDP-2-C-methyl-D-erythritol 2-phosphate is bound by residues 57-59, 62-66, 133-136, Phe140, and Arg143; these read DIG, FPDTD, and TTTE.

This sequence belongs to the IspF family. As to quaternary structure, homotrimer. It depends on a divalent metal cation as a cofactor.

The catalysed reaction is 4-CDP-2-C-methyl-D-erythritol 2-phosphate = 2-C-methyl-D-erythritol 2,4-cyclic diphosphate + CMP. Its pathway is isoprenoid biosynthesis; isopentenyl diphosphate biosynthesis via DXP pathway; isopentenyl diphosphate from 1-deoxy-D-xylulose 5-phosphate: step 4/6. In terms of biological role, involved in the biosynthesis of isopentenyl diphosphate (IPP) and dimethylallyl diphosphate (DMAPP), two major building blocks of isoprenoid compounds. Catalyzes the conversion of 4-diphosphocytidyl-2-C-methyl-D-erythritol 2-phosphate (CDP-ME2P) to 2-C-methyl-D-erythritol 2,4-cyclodiphosphate (ME-CPP) with a corresponding release of cytidine 5-monophosphate (CMP). The chain is 2-C-methyl-D-erythritol 2,4-cyclodiphosphate synthase from Haemophilus influenzae (strain PittGG).